A 263-amino-acid chain; its full sequence is Glutamate/glutamine/aspartate/asparagine transport ATP-binding protein BztD (263 aa).

Residues 23-257 (IQISQMNKWY…PQSERTKQFL (235 aa)) enclose the ABC transporter domain. An ATP-binding site is contributed by 55–62 (GPSGSGKS).

Belongs to the ABC transporter superfamily. As to quaternary structure, bztB and BztC form a heterodimer which can form a membrane complex with a homodimer of BztD.

Its subcellular location is the cell membrane. Functionally, part of a binding-protein-dependent transport system for glutamate, glutamine, aspartate, asparagine. Probably responsible for energy coupling to the transport system. This Rhodobacter capsulatus (strain ATCC BAA-309 / NBRC 16581 / SB1003) protein is Glutamate/glutamine/aspartate/asparagine transport ATP-binding protein BztD (bztD).